The chain runs to 275 residues: MAPIGDDATQTLHDLVNKLESRVKELEDKLAHAAGGSAPSSSEGIRMILMGPPGAGKGTQAPKIKEKFSCCHLATGDMLRSQVAKKTPLGREAKKIMDQGGLVSDEIVIGMIKAELETNQECKGGFILDGFPRTVVQAERLDAMLSARNQKLQHAVELQIDDSLLVSRITGRLVHPASGRSYHRVFNPPKAEMKDDITGEPLVSRSDDNAEALKKRLVTYHDQTAPVVGYYQKTGIWSGIDASQEPGAVWKSLLGVFDKQKAPSGSLLSKITGRS.

Residue 54-59 (GAGKGT) participates in ATP binding. The segment at 74-103 (ATGDMLRSQVAKKTPLGREAKKIMDQGGLV) is NMP. Residues Thr75, Arg80, 101–103 (GLV), 130–133 (GFPR), and Gln137 each bind AMP. The segment at 171 to 208 (GRLVHPASGRSYHRVFNPPKAEMKDDITGEPLVSRSDD) is LID. ATP is bound by residues Arg172 and 181–182 (SY). Residues Arg205 and Arg216 each contribute to the AMP site. Gln244 is a binding site for ATP.

It belongs to the adenylate kinase family. AK2 subfamily. As to quaternary structure, monomer.

Its subcellular location is the cytoplasm. It localises to the cytosol. The protein localises to the mitochondrion intermembrane space. The catalysed reaction is AMP + ATP = 2 ADP. Its function is as follows. Catalyzes the reversible transfer of the terminal phosphate group between ATP and AMP. Plays an important role in cellular energy homeostasis and in adenine nucleotide metabolism. Adenylate kinase activity is critical for regulation of the phosphate utilization and the AMP de novo biosynthesis pathways. In Sclerotinia sclerotiorum (strain ATCC 18683 / 1980 / Ss-1) (White mold), this protein is Adenylate kinase (adk1).